We begin with the raw amino-acid sequence, 350 residues long: C4-dicarboxylate-binding protein DctB (350 aa).

Positions 1–18 are cleaved as a signal peptide; that stretch reads MKSLLACLALMIAGIATA.

The protein belongs to the bacterial solute-binding protein 7 family.

Its subcellular location is the secreted. Its function is as follows. Part of the binding-protein-dependent transport system for uptake of C4-dicarboxylates. Responsible for growth on fumarate and succinate but not malate. Is not directly involved in C4-dicarboxylate uptake, but plays a sensory role in the DctS/DctR two-component system which regulates the expression of the dctA C4-dicarboxylate transporter. This Bacillus subtilis (strain 168) protein is C4-dicarboxylate-binding protein DctB (dctB).